The sequence spans 161 residues: SsrA-binding protein (161 aa).

This sequence belongs to the SmpB family.

It localises to the cytoplasm. Functionally, required for rescue of stalled ribosomes mediated by trans-translation. Binds to transfer-messenger RNA (tmRNA), required for stable association of tmRNA with ribosomes. tmRNA and SmpB together mimic tRNA shape, replacing the anticodon stem-loop with SmpB. tmRNA is encoded by the ssrA gene; the 2 termini fold to resemble tRNA(Ala) and it encodes a 'tag peptide', a short internal open reading frame. During trans-translation Ala-aminoacylated tmRNA acts like a tRNA, entering the A-site of stalled ribosomes, displacing the stalled mRNA. The ribosome then switches to translate the ORF on the tmRNA; the nascent peptide is terminated with the 'tag peptide' encoded by the tmRNA and targeted for degradation. The ribosome is freed to recommence translation, which seems to be the essential function of trans-translation. This chain is SsrA-binding protein, found in Baumannia cicadellinicola subsp. Homalodisca coagulata.